The following is a 29-amino-acid chain: Cytochrome b6-f complex subunit 8 (29 aa).

A helical transmembrane segment spans residues 3–23; the sequence is ILALGWVSVLALFTWSIAMVV.

The protein belongs to the PetN family. As to quaternary structure, the 4 large subunits of the cytochrome b6-f complex are cytochrome b6, subunit IV (17 kDa polypeptide, PetD), cytochrome f and the Rieske protein, while the 4 small subunits are PetG, PetL, PetM and PetN. The complex functions as a dimer.

The protein resides in the cellular thylakoid membrane. Component of the cytochrome b6-f complex, which mediates electron transfer between photosystem II (PSII) and photosystem I (PSI), cyclic electron flow around PSI, and state transitions. This chain is Cytochrome b6-f complex subunit 8, found in Gloeothece citriformis (strain PCC 7424) (Cyanothece sp. (strain PCC 7424)).